The sequence spans 487 residues: Transmembrane protein 161B (487 aa).

N-linked (GlcNAc...) asparagine glycosylation occurs at N34. Residues 107–127 (LVDFTVAATIVYLVTEVYYSF) form a helical membrane-spanning segment. The N-linked (GlcNAc...) asparagine glycan is linked to N135. 2 consecutive transmembrane segments (helical) span residues 136–156 (ISLV…FSLT) and 169–189 (SVCV…LIVT). N-linked (GlcNAc...) asparagine glycosylation is present at N203. Transmembrane regions (helical) follow at residues 228–248 (FKFF…FPGL), 265–285 (ITQT…LLWV), 305–325 (LMTE…LCVL), 367–387 (VFYY…MLLH), and 459–479 (LSFL…FGLF).

The protein belongs to the TMEM161 family.

It localises to the cell membrane. Its function is as follows. Essential for maintaining normal cardiac rhythm in the developing heart and for neonatal survival. Inhibits potassium and calcium currents in the cardiomyocytes, this assists in timely action potential repolarization and thereby maintains normal cardiac rhythm. The chain is Transmembrane protein 161B (Tmem161b) from Mus musculus (Mouse).